Here is a 380-residue protein sequence, read N- to C-terminus: Alcohol dehydrogenase-like 4 (380 aa).

Zn(2+) contacts are provided by Cys-47, Thr-49, His-70, Cys-100, Cys-103, Cys-106, Cys-114, and Cys-180. An alcohol is bound by residues Thr-49 and His-70. Thr-49 is a binding site for NAD(+). Residues 205-210, Asp-229, Lys-234, 298-300, Phe-325, and Arg-375 each bind NAD(+); these read GLGAVG and LGV.

It belongs to the zinc-containing alcohol dehydrogenase family. Class-III subfamily. Homodimer. Zn(2+) serves as cofactor.

Its subcellular location is the cytoplasm. The catalysed reaction is a primary alcohol + NAD(+) = an aldehyde + NADH + H(+). It carries out the reaction a secondary alcohol + NAD(+) = a ketone + NADH + H(+). The sequence is that of Alcohol dehydrogenase-like 4 from Arabidopsis thaliana (Mouse-ear cress).